The primary structure comprises 194 residues: MILKKILPYSKELLKMAAGEGDIVVDATMGNGHDTQFLAELVGENGHVYAFDIQESAVANTKERLGDMYQARTTLFHKSHDKIAESLPPETHGKVAAAVFNLGYLPGGDKSITTNGSSTIKAIEQLLSIMKDEGLIVLVVYHGHPEGKAEKNDVLEFCRDLDQQTARVLTYGFINQQNDPPFIVAIEKKAQISK.

His-33, Asp-34, Asp-52, Gln-54, Ser-79, and His-80 together coordinate S-adenosyl-L-methionine.

Belongs to the methyltransferase superfamily. MnmM family. As to quaternary structure, homodimer.

It carries out the reaction 5-aminomethyl-2-thiouridine(34) in tRNA + S-adenosyl-L-methionine = 5-methylaminomethyl-2-thiouridine(34) in tRNA + S-adenosyl-L-homocysteine + H(+). It participates in tRNA modification. Involved in the biosynthesis of 5-methylaminomethyl-2-thiouridine (mnm(5)s(2)U) at the wobble position (U34) in tRNA. Catalyzes the transfer of a methyl group from S-adenosyl-L-methionine to nm(5)s(2)U34 to form mnm(5)s(2)U34. This chain is tRNA (mnm(5)s(2)U34)-methyltransferase, found in Bacillus subtilis (strain 168).